Reading from the N-terminus, the 539-residue chain is Interleukin-2 receptor subunit beta (539 aa).

An N-terminal signal peptide occupies residues 1–26; the sequence is MATIALPWSLSLYVFLLLLATPWASA. The Extracellular portion of the chain corresponds to 27–240; that stretch reads AVKNCSHLEC…RTRPADPMKE (214 aa). Residues asparagine 30, asparagine 43, asparagine 55, and asparagine 71 are each glycosylated (N-linked (GlcNAc...) asparagine). Cysteine 36 and cysteine 46 form a disulfide bridge. Cysteine 74 and cysteine 86 are disulfide-bonded. Positions 135–235 constitute a Fibronectin type-III domain; sequence APHSLQVLHI…QPLTFRTRPA (101 aa). Asparagine 150 and asparagine 216 each carry an N-linked (GlcNAc...) asparagine glycan. The WSXWS motif signature appears at 221–225; sequence WSPWS. A helical membrane pass occupies residues 241–268; that stretch reads ILPMSWLRYLLLVLGCFSGFFSCVYILV. Topologically, residues 269–539 are cytoplasmic; sequence KCRYLGPWLK…LQAQDSVHLI (271 aa). The Box 1 motif signature appears at 281 to 289; that stretch reads LKCHIPDPS. 3 disordered regions span residues 395–419, 440–465, and 477–516; these read VEED…GEQD, PNTA…LPSL, and LERM…QGPI.

The protein belongs to the type I cytokine receptor family. Type 4 subfamily. Non-covalent dimer of an alpha and a beta subunit. IL2R exists in 3 different forms: a high affinity dimer, an intermediate affinity monomer (beta subunit), and a low affinity monomer (alpha subunit). The high and intermediate affinity forms also associate with a gamma subunit. Interacts with SHB upon interleukin stimulation.

It localises to the cell membrane. It is found in the cell surface. In terms of biological role, receptor for interleukin-2. This beta subunit is involved in receptor mediated endocytosis and transduces the mitogenic signals of IL2. Probably in association with IL15RA, involved in the stimulation of neutrophil phagocytosis by IL15. The chain is Interleukin-2 receptor subunit beta (Il2rb) from Mus musculus (Mouse).